We begin with the raw amino-acid sequence, 396 residues long: Elongation factor Tu (396 aa).

Positions 10–205 constitute a tr-type G domain; sequence KSHANIGTIG…AVDEYIPTPE (196 aa). Residues 19–26 form a G1 region; that stretch reads GHVDHGKT. A GTP-binding site is contributed by 19 to 26; it reads GHVDHGKT. Residue Thr-26 participates in Mg(2+) binding. The G2 stretch occupies residues 61-65; the sequence is GITIS. The tract at residues 82–85 is G3; the sequence is DCPG. GTP is bound by residues 82 to 86 and 137 to 140; these read DCPGH and NKCD. The G4 stretch occupies residues 137 to 140; that stretch reads NKCD. A G5 region spans residues 175 to 177; the sequence is SAL.

Belongs to the TRAFAC class translation factor GTPase superfamily. Classic translation factor GTPase family. EF-Tu/EF-1A subfamily. As to quaternary structure, monomer.

Its subcellular location is the cytoplasm. It catalyses the reaction GTP + H2O = GDP + phosphate + H(+). In terms of biological role, GTP hydrolase that promotes the GTP-dependent binding of aminoacyl-tRNA to the A-site of ribosomes during protein biosynthesis. In Bacillus pumilus (strain SAFR-032), this protein is Elongation factor Tu.